Reading from the N-terminus, the 510-residue chain is NEDD8-activating enzyme E1 regulatory subunit (510 aa).

The residue at position 2 (Ala-2) is an N-acetylalanine. N6-acetyllysine is present on residues Lys-6 and Lys-317. The interaction with UBA3 stretch occupies residues 307–320 (DMIADSGKYIKLQN).

It belongs to the ubiquitin-activating E1 family. ULA1 subfamily. In terms of assembly, heterodimer of UBA3 and NAE1. The complex binds NEDD8 and UBE2M. Binds APP and TP53BP2. In terms of processing, ubiquitinated by TRIP12, leading to its degradation by the proteasome.

It localises to the cell membrane. It functions in the pathway protein modification; protein neddylation. With respect to regulation, binding of TP53BP2 to the regulatory subunit NAE1 decreases neddylation activity. Its function is as follows. Regulatory subunit of the dimeric UBA3-NAE1 E1 enzyme. E1 activates NEDD8 by first adenylating its C-terminal glycine residue with ATP, thereafter linking this residue to the side chain of the catalytic cysteine, yielding a NEDD8-UBA3 thioester and free AMP. E1 finally transfers NEDD8 to the catalytic cysteine of UBE2M. Necessary for cell cycle progression through the S-M checkpoint. Overexpression of NAE1 causes apoptosis through deregulation of NEDD8 conjugation. The covalent attachment of NEDD8 to target proteins is known as 'neddylation' and the process is involved in the regulation of cell growth, viability and development. The sequence is that of NEDD8-activating enzyme E1 regulatory subunit (NAE1) from Macaca fascicularis (Crab-eating macaque).